A 121-amino-acid polypeptide reads, in one-letter code: Small ribosomal subunit protein uS13 (121 aa).

Positions V97–K121 are disordered. Basic residues predominate over residues Q100 to K121.

It belongs to the universal ribosomal protein uS13 family. As to quaternary structure, part of the 30S ribosomal subunit. Forms a loose heterodimer with protein S19. Forms two bridges to the 50S subunit in the 70S ribosome.

Located at the top of the head of the 30S subunit, it contacts several helices of the 16S rRNA. In the 70S ribosome it contacts the 23S rRNA (bridge B1a) and protein L5 of the 50S subunit (bridge B1b), connecting the 2 subunits; these bridges are implicated in subunit movement. Contacts the tRNAs in the A and P-sites. The sequence is that of Small ribosomal subunit protein uS13 from Synechococcus sp. (strain CC9311).